A 276-amino-acid polypeptide reads, in one-letter code: MRITLFDVQAMKPAGQRIAMLTAYDHPSAVLAERAGVPMLLVGDSLGMAVHGFDTTLPVTLDDMIRHARAVVRGTSRALVVADLPFLTYATEADAIASARRVMQEAGVQALKLEGGATIAPTVRRLTELGVPVMGHLGLTPQSQHTLGLRVQARQAAEARRLLDDALALQDAGAFAIVLELVPTELAQAVTRRLQIPVIGIGAGAGCDGQVQVWHDILGLFPGKSPRHAKRFAEIGTAIEDALRAYVSEVQSGTFPTEAQSSRMKPDELSRALNAE.

Mg(2+)-binding residues include Asp44 and Asp83. Residues 44 to 45, Asp83, and Lys112 each bind 3-methyl-2-oxobutanoate; that span reads DS. Glu114 is a binding site for Mg(2+). Glu180 (proton acceptor) is an active-site residue. The segment at 256 to 276 is disordered; the sequence is PTEAQSSRMKPDELSRALNAE.

This sequence belongs to the PanB family. In terms of assembly, homodecamer; pentamer of dimers. It depends on Mg(2+) as a cofactor.

The protein localises to the cytoplasm. The enzyme catalyses 3-methyl-2-oxobutanoate + (6R)-5,10-methylene-5,6,7,8-tetrahydrofolate + H2O = 2-dehydropantoate + (6S)-5,6,7,8-tetrahydrofolate. It participates in cofactor biosynthesis; (R)-pantothenate biosynthesis; (R)-pantoate from 3-methyl-2-oxobutanoate: step 1/2. Catalyzes the reversible reaction in which hydroxymethyl group from 5,10-methylenetetrahydrofolate is transferred onto alpha-ketoisovalerate to form ketopantoate. The sequence is that of 3-methyl-2-oxobutanoate hydroxymethyltransferase from Gluconacetobacter diazotrophicus (strain ATCC 49037 / DSM 5601 / CCUG 37298 / CIP 103539 / LMG 7603 / PAl5).